Here is a 418-residue protein sequence, read N- to C-terminus: Light-independent protochlorophyllide reductase subunit N (418 aa).

[4Fe-4S] cluster contacts are provided by Cys17, Cys42, and Cys103.

This sequence belongs to the BchN/ChlN family. Protochlorophyllide reductase is composed of three subunits; ChlL, ChlN and ChlB. Forms a heterotetramer of two ChlB and two ChlN subunits. [4Fe-4S] cluster serves as cofactor.

It carries out the reaction chlorophyllide a + oxidized 2[4Fe-4S]-[ferredoxin] + 2 ADP + 2 phosphate = protochlorophyllide a + reduced 2[4Fe-4S]-[ferredoxin] + 2 ATP + 2 H2O. The protein operates within porphyrin-containing compound metabolism; chlorophyll biosynthesis (light-independent). Functionally, component of the dark-operative protochlorophyllide reductase (DPOR) that uses Mg-ATP and reduced ferredoxin to reduce ring D of protochlorophyllide (Pchlide) to form chlorophyllide a (Chlide). This reaction is light-independent. The NB-protein (ChlN-ChlB) is the catalytic component of the complex. The chain is Light-independent protochlorophyllide reductase subunit N from Prochlorococcus marinus (strain MIT 9215).